Reading from the N-terminus, the 500-residue chain is Cytochrome P450 11B2, mitochondrial (500 aa).

A mitochondrion-targeting transit peptide spans 1–24 (MALRVTADVWLARPWQCLHRTRAL). F381 is a 21-hydroxyprogesterone binding site. Position 447 (C447) interacts with heme.

This sequence belongs to the cytochrome P450 family. It depends on heme as a cofactor.

It is found in the mitochondrion inner membrane. It catalyses the reaction a steroid + 2 reduced [adrenodoxin] + O2 + 2 H(+) = an 11beta-hydroxysteroid + 2 oxidized [adrenodoxin] + H2O. It carries out the reaction 21-hydroxyprogesterone + 2 reduced [adrenodoxin] + O2 + 2 H(+) = corticosterone + 2 oxidized [adrenodoxin] + H2O. The enzyme catalyses corticosterone + 2 reduced [adrenodoxin] + O2 + 2 H(+) = 18-hydroxycorticosterone + 2 oxidized [adrenodoxin] + H2O. The catalysed reaction is 18-hydroxycorticosterone + 2 reduced [adrenodoxin] + O2 + 2 H(+) = aldosterone + 2 oxidized [adrenodoxin] + 2 H2O. It catalyses the reaction 11-deoxycortisol + 2 reduced [adrenodoxin] + O2 + 2 H(+) = cortisol + 2 oxidized [adrenodoxin] + H2O. It carries out the reaction 21-hydroxyprogesterone + 2 reduced [adrenodoxin] + O2 + 2 H(+) = 18-hydroxy-11-deoxycorticosterone + 2 oxidized [adrenodoxin] + H2O. The enzyme catalyses cortisol + 2 reduced [adrenodoxin] + O2 + 2 H(+) = 18-hydroxycortisol + 2 oxidized [adrenodoxin] + H2O. The catalysed reaction is 18-hydroxycortisol + 2 reduced [adrenodoxin] + O2 + 2 H(+) = 18-oxocortisol + 2 oxidized [adrenodoxin] + 2 H2O. Its pathway is steroid biosynthesis. A cytochrome P450 monooxygenase that catalyzes the biosynthesis of aldosterone, the main mineralocorticoid in the human body responsible for salt and water homeostasis, thus involved in blood pressure regulation, arterial hypertension, and the development of heart failure. Catalyzes three sequential oxidative reactions of 11-deoxycorticosterone (21-hydroxyprogesterone), namely 11-beta hydroxylation, followed by two successive oxidations at C18 yielding 18-hydroxy and then 18-oxo intermediates (that would not leave the enzyme active site during the consecutive hydroxylation reactions), ending with the formation of aldosterone. Can also produce 18-hydroxycortisol and 18-oxocortisol, derived from successive oxidations of cortisol at C18, normally found at very low levels, but significantly increased in primary aldosteronism, the most common form of secondary hypertension. Mechanistically, uses molecular oxygen inserting one oxygen atom into a substrate and reducing the second into a water molecule. Two electrons are provided by NADPH via a two-protein mitochondrial transfer system comprising flavoprotein FDXR (adrenodoxin/ferredoxin reductase) and nonheme iron-sulfur protein FDX1 or FDX2 (adrenodoxin/ferredoxin). Could also be involved in the androgen metabolic pathway. The polypeptide is Cytochrome P450 11B2, mitochondrial (Cyp11b2) (Mus musculus (Mouse)).